The sequence spans 259 residues: Small ribosomal subunit protein uS2 (259 aa).

This sequence belongs to the universal ribosomal protein uS2 family.

The polypeptide is Small ribosomal subunit protein uS2 (Streptococcus pneumoniae (strain CGSP14)).